The sequence spans 112 residues: K(+)/H(+) antiporter modulator KhtS (112 aa).

The interval 42–64 (YVPMSSYPQETQSAKTPSPGSMH) is disordered. Residues 47 to 60 (SYPQETQSAKTPSP) are compositionally biased toward polar residues.

It localises to the cell membrane. In terms of biological role, modulates the activity of the potassium/proton antiporter KhtU. Involved in protection of the cell from methylglyoxal, a toxic by-product of glycolysis. In Bacillus subtilis (strain 168), this protein is K(+)/H(+) antiporter modulator KhtS.